A 434-amino-acid chain; its full sequence is Putative nuclease OPG089 (434 aa).

The Mg(2+) site is built by Asp33, Asp74, Glu168, Asp170, Asp196, and Asp198.

It belongs to the XPG/RAD2 endonuclease family. FEN1 subfamily. Requires Mg(2+) as cofactor.

The protein localises to the virion. In terms of biological role, putative nuclease that seems to be required for double-strand break repair, homologous recombination, and production of full-length viral genomic DNA. The sequence is that of Putative nuclease OPG089 (OPG089) from Vaccinia virus (strain Copenhagen) (VACV).